A 496-amino-acid polypeptide reads, in one-letter code: Transmembrane transporter swnT (496 aa).

The next 5 membrane-spanning stretches (helical) occupy residues 40–60 (LSAI…PLIL), 72–92 (VFWG…TLAE), 124–144 (AMIS…SVPL), 162–182 (WMGF…ACFE), and 191–211 (AFLL…FAMA). Residue N225 is glycosylated (N-linked (GlcNAc...) asparagine). 6 consecutive transmembrane segments (helical) span residues 270-290 (LLWT…AVLV), 314-334 (AAAI…VWSI), 368-388 (PIWS…LYLA), 396-416 (LIAT…VLVL), 434-454 (GLVA…FYCF), and 467-487 (YVSG…ILYA).

The protein belongs to the amino acid-polyamine-organocation (APC) superfamily. Amino acid/choline transporter (ACT) (TC 2.A.3.4) family.

It localises to the membrane. Functionally, transmembrane transporter; part of the gene cluster that mediates the biosynthesis of swainsonine, a cytotoxic fungal alkaloid and a potential cancer therapy drug. Does not mediate the secretion of SW and the exact role of swnT in SW biosynthesis remains to be determined. The protein is Transmembrane transporter swnT of Metarhizium robertsii (strain ARSEF 23 / ATCC MYA-3075) (Metarhizium anisopliae (strain ARSEF 23)).